Here is a 570-residue protein sequence, read N- to C-terminus: GDP-Man:Man(3)GlcNAc(2)-PP-Dol alpha-1,2-mannosyltransferase (570 aa).

The Lumenal segment spans residues 1 to 7 (MKLADFV). A helical transmembrane segment spans residues 8 to 70 (TYVFGSLLAG…DFGWKNSSVR (63 aa)). Topologically, residues 71–200 (RAFILASERP…RLVESKSWPK (130 aa)) are cytoplasmic. An intramembrane region (helical) is located at residues 201–221 (FTLLGQAYGSIILSIEALTTL). Topologically, residues 222–446 (APDYWIDTMG…FGINAMWNEH (225 aa)) are cytoplasmic. Residues 447 to 467 (FGIAVVEYMASGLIPLCHASA) constitute an intramembrane region (helical). At 468–570 (GPLYDIVVPW…LNLTHNRMFS (103 aa)) the chain is on the cytoplasmic side.

The protein belongs to the glycosyltransferase group 1 family.

It is found in the endoplasmic reticulum membrane. The catalysed reaction is an alpha-D-Man-(1-&gt;3)-[alpha-D-Man-(1-&gt;6)]-beta-D-Man-(1-&gt;4)-beta-D-GlcNAc-(1-&gt;4)-alpha-D-GlcNAc-diphospho-di-trans,poly-cis-dolichol + 2 GDP-alpha-D-mannose = an alpha-D-Man-(1-&gt;2)-alpha-D-Man-(1-&gt;2)-alpha-D-Man-(1-&gt;3)-[alpha-D-Man-(1-&gt;6)]-beta-D-Man-(1-&gt;4)-beta-D-GlcNAc-(1-&gt;4)-alpha-D-GlcNAc-diphospho-di-trans,poly-cis-dolichol + 2 GDP + 2 H(+). It functions in the pathway protein modification; protein glycosylation. In terms of biological role, GDP-Man:Man(3)GlcNAc(2)-PP-Dol alpha-1,2-mannosyltransferase that operates in the biosynthetic pathway of dolichol-linked oligosaccharides, the glycan precursors employed in protein asparagine (N)-glycosylation. The assembly of dolichol-linked oligosaccharides begins on the cytosolic side of the endoplasmic reticulum membrane and finishes in its lumen. The sequential addition of sugars to dolichol pyrophosphate produces dolichol-linked oligosaccharides containing fourteen sugars, including two GlcNAcs, nine mannoses and three glucoses. Once assembled, the oligosaccharide is transferred from the lipid to nascent proteins by oligosaccharyltransferases. Catalyzes, on the cytoplasmic face of the endoplasmic reticulum, the addition of the fourth and fifth mannose residues to the dolichol-linked oligosaccharide chain, to produce Man(5)GlcNAc(2)-PP-dolichol core oligosaccharide. In Kluyveromyces lactis (strain ATCC 8585 / CBS 2359 / DSM 70799 / NBRC 1267 / NRRL Y-1140 / WM37) (Yeast), this protein is GDP-Man:Man(3)GlcNAc(2)-PP-Dol alpha-1,2-mannosyltransferase (ALG11).